Consider the following 253-residue polypeptide: Ubiquinone biosynthesis O-methyltransferase (253 aa).

Arg47, Gly78, Asp99, and Met141 together coordinate S-adenosyl-L-methionine.

It belongs to the methyltransferase superfamily. UbiG/COQ3 family.

It catalyses the reaction a 3-demethylubiquinol + S-adenosyl-L-methionine = a ubiquinol + S-adenosyl-L-homocysteine + H(+). It carries out the reaction a 3-(all-trans-polyprenyl)benzene-1,2-diol + S-adenosyl-L-methionine = a 2-methoxy-6-(all-trans-polyprenyl)phenol + S-adenosyl-L-homocysteine + H(+). The protein operates within cofactor biosynthesis; ubiquinone biosynthesis. In terms of biological role, O-methyltransferase that catalyzes the 2 O-methylation steps in the ubiquinone biosynthetic pathway. The polypeptide is Ubiquinone biosynthesis O-methyltransferase (Rhodopseudomonas palustris (strain HaA2)).